Consider the following 271-residue polypeptide: Phosphatidylglycerol--prolipoprotein diacylglyceryl transferase (271 aa).

Transmembrane regions (helical) follow at residues 21–41 (ISVR…MWLA), 60–80 (LLFA…VLFY), 95–115 (VWTG…AMLW), 124–144 (FFGV…VGRL), 176–196 (SQLY…NWFI), 203–223 (GSVS…VEYV), and 230–250 (LGLF…MIIG). An a 1,2-diacyl-sn-glycero-3-phospho-(1'-sn-glycerol)-binding site is contributed by Arg143.

It belongs to the Lgt family.

The protein resides in the cell inner membrane. The catalysed reaction is L-cysteinyl-[prolipoprotein] + a 1,2-diacyl-sn-glycero-3-phospho-(1'-sn-glycerol) = an S-1,2-diacyl-sn-glyceryl-L-cysteinyl-[prolipoprotein] + sn-glycerol 1-phosphate + H(+). The protein operates within protein modification; lipoprotein biosynthesis (diacylglyceryl transfer). In terms of biological role, catalyzes the transfer of the diacylglyceryl group from phosphatidylglycerol to the sulfhydryl group of the N-terminal cysteine of a prolipoprotein, the first step in the formation of mature lipoproteins. In Vibrio vulnificus (strain YJ016), this protein is Phosphatidylglycerol--prolipoprotein diacylglyceryl transferase.